The sequence spans 277 residues: tRNA uridine(34) hydroxylase (277 aa).

One can recognise a Rhodanese domain in the interval 126–221 (SSPDVHVIDT…YLETMRGDDS (96 aa)). Cys-181 functions as the Cysteine persulfide intermediate in the catalytic mechanism.

This sequence belongs to the TrhO family.

The enzyme catalyses uridine(34) in tRNA + AH2 + O2 = 5-hydroxyuridine(34) in tRNA + A + H2O. In terms of biological role, catalyzes oxygen-dependent 5-hydroxyuridine (ho5U) modification at position 34 in tRNAs. The chain is tRNA uridine(34) hydroxylase from Anaplasma marginale (strain St. Maries).